Consider the following 271-residue polypeptide: MLLTVDVRNTNIVLGLFTGTGEHSKLVQDWRMRTDARMTADELALIFRGLLGAHTDQITGVSALSTVPSVLREIRVMLTRYWGHVPHVLVEPGVRTGVPLLVDNPKEVGADRIVNSLAAHHLYDAPCIVVDFGTSTCVDVVSAKGEFLGGAIAPGLEISSDALASQSAALRKVELVRPRSVVGKNTVECMQSGAVFGFAGLVDGLVRRVRRELPAFSGSDVVVIATGDRAPLIMPETETVDEHEPDLTLEGLRLVYERNQARRGARRSPLD.

6-13 is an ATP binding site; that stretch reads DVRNTNIV. 109–112 is a binding site for substrate; sequence GADR. The Proton acceptor role is filled by Asp111. Asp131 is a binding site for K(+). Residue Thr134 coordinates ATP. Thr186 contributes to the substrate binding site.

This sequence belongs to the type III pantothenate kinase family. As to quaternary structure, homodimer. The cofactor is NH4(+). K(+) serves as cofactor.

Its subcellular location is the cytoplasm. The enzyme catalyses (R)-pantothenate + ATP = (R)-4'-phosphopantothenate + ADP + H(+). It functions in the pathway cofactor biosynthesis; coenzyme A biosynthesis; CoA from (R)-pantothenate: step 1/5. Functionally, catalyzes the phosphorylation of pantothenate (Pan), the first step in CoA biosynthesis. The chain is Type III pantothenate kinase from Rhodococcus opacus (strain B4).